Consider the following 436-residue polypeptide: F-box/LRR-repeat protein 20 (436 aa).

Residues 22 to 68 enclose the F-box domain; sequence AVINKKLPKELLLRIFSFLDVVTLCRCAQVSRAWNVLALDGSNWQRI. LRR repeat units lie at residues 74–100, 101–126, 127–152, 153–178, 179–204, 205–230, 231–256, 257–282, 283–308, 309–334, 335–363, 364–388, and 389–414; these read QRDIEGRVVENISKRCGGFLRKLSLRG, CLGVGDNALRTFAQNCRNIEVLSLNG, CTKTTDATCTSLSKFCSKLRHLDLAS, CTSITNMSLKALSEGCPLLEQLNISW, CDQVTKDGIQALVRGCGGLKALFLKG, CTQLEDEALKYIGAHCPELVTLNLQT, CLQITDEGLITICRGCHKLQSLCASG, CSNITDAILNALGQNCPRLRILEVAR, CSQLTDVGFTTLARNCHELEKMDLEE, CVQITDSTLIQLSIHCPRLQVLSLSH, CELITDDGIRHLGNGACAHDQLEVIELDN, CPLITDASLEHLKSCHSLERIELYD, and CQQITRAGIKRLRTHLPNIKVHAYFA. Position 417 is a phosphothreonine (Thr-417). Ser-421 bears the Phosphoserine mark.

As to quaternary structure, interacts with SKP1 and CUL1. As to expression, highly expressed in brain.

It is found in the cytoplasm. Substrate-recognition component of the SCF (SKP1-CUL1-F-box protein)-type E3 ubiquitin ligase complex. Isoform 3 regulates neural transmission by binding and ubiquitinating RIMS1, a modulator of presynaptic plasticity. The chain is F-box/LRR-repeat protein 20 (Fbxl20) from Mus musculus (Mouse).